Here is a 774-residue protein sequence, read N- to C-terminus: DNA ligase 3 (774 aa).

The disordered stretch occupies residues 1 to 25 (MPPKKRMKNGSSLKSTSKKGEKSRN). Lys433 (N6-AMP-lysine intermediate) is an active-site residue.

Belongs to the ATP-dependent DNA ligase family.

It is found in the nucleus. The enzyme catalyses ATP + (deoxyribonucleotide)n-3'-hydroxyl + 5'-phospho-(deoxyribonucleotide)m = (deoxyribonucleotide)n+m + AMP + diphosphate.. The chain is DNA ligase 3 (adl1) from Schizosaccharomyces pombe (strain 972 / ATCC 24843) (Fission yeast).